Reading from the N-terminus, the 311-residue chain is UPF0324 membrane protein VV1_3166 (311 aa).

Transmembrane regions (helical) follow at residues 8 to 28, 51 to 71, 74 to 94, 106 to 126, 133 to 153, 165 to 185, 197 to 217, 228 to 248, 256 to 276, and 289 to 309; these read FIFALLLCLSPWVSSPTALVL, LLSYSIIGLGFGIQFQQAIAV, DGIGLIVVTIAGTLLLGFLVA, LISAGTAICGGSAIAAVAPAI, IALALATVFVLNSLALFIFPV, FGTWAAIAIHDTSSVVGAASA, LKLARALWIIPVALLSAILFA, LVLPYFIFWYCAAIAFSDLFP, GIFSVAKQALVVCLFLIGCSI, and LIFGLSLWVVISTTSLSWLLL.

Belongs to the UPF0324 family.

It is found in the cell membrane. The polypeptide is UPF0324 membrane protein VV1_3166 (Vibrio vulnificus (strain CMCP6)).